Here is a 242-residue protein sequence, read N- to C-terminus: Large ribosomal subunit protein uL1 (242 aa).

Belongs to the universal ribosomal protein uL1 family. In terms of assembly, part of the 50S ribosomal subunit.

Its function is as follows. Binds directly to 23S rRNA. The L1 stalk is quite mobile in the ribosome, and is involved in E site tRNA release. In terms of biological role, protein L1 is also a translational repressor protein, it controls the translation of the L11 operon by binding to its mRNA. The protein is Large ribosomal subunit protein uL1 of Persephonella marina (strain DSM 14350 / EX-H1).